The chain runs to 458 residues: Tyrosine phenol-lyase (458 aa).

Residue lysine 258 is modified to N6-(pyridoxal phosphate)lysine.

This sequence belongs to the beta-eliminating lyase family. As to quaternary structure, homotetramer. Pyridoxal 5'-phosphate serves as cofactor.

The enzyme catalyses L-tyrosine + H2O = phenol + pyruvate + NH4(+). This is Tyrosine phenol-lyase (tpl) from Symbiobacterium sp. (strain SC-1).